Consider the following 199-residue polypeptide: Probable thymidylate kinase (199 aa).

7 to 14 (GLDGSGKT) contributes to the ATP binding site.

It belongs to the thymidylate kinase family.

It carries out the reaction dTMP + ATP = dTDP + ADP. The chain is Probable thymidylate kinase from Halobacterium salinarum (strain ATCC 29341 / DSM 671 / R1).